The chain runs to 492 residues: Phosphatidylglycerol--prolipoprotein diacylglyceryl transferase (492 aa).

9 consecutive transmembrane segments (helical) span residues 40 to 60, 72 to 92, 106 to 126, 133 to 153, 184 to 204, 214 to 234, 361 to 381, 409 to 429, and 441 to 461; these read IFGI…YVGW, AIRQ…VVVP, VAVR…VGLA, AGLG…GGLL, QGGL…LIAL, IGDV…LGCL, VWGT…VLLI, GVLM…LEWI, and LSIS…TLFI. Residue Arg-230 participates in a 1,2-diacyl-sn-glycero-3-phospho-(1'-sn-glycerol) binding.

The protein belongs to the Lgt family.

The protein resides in the cell inner membrane. It catalyses the reaction L-cysteinyl-[prolipoprotein] + a 1,2-diacyl-sn-glycero-3-phospho-(1'-sn-glycerol) = an S-1,2-diacyl-sn-glyceryl-L-cysteinyl-[prolipoprotein] + sn-glycerol 1-phosphate + H(+). Its pathway is protein modification; lipoprotein biosynthesis (diacylglyceryl transfer). In terms of biological role, catalyzes the transfer of the diacylglyceryl group from phosphatidylglycerol to the sulfhydryl group of the N-terminal cysteine of a prolipoprotein, the first step in the formation of mature lipoproteins. This is Phosphatidylglycerol--prolipoprotein diacylglyceryl transferase from Rhodopirellula baltica (strain DSM 10527 / NCIMB 13988 / SH1).